Reading from the N-terminus, the 539-residue chain is Chaperonin GroEL 2 (539 aa).

Residues 30 to 33, K51, 87 to 91, G415, 480 to 482, and D496 each bind ATP; these read TLGP, DGTTT, and NAA.

It belongs to the chaperonin (HSP60) family. Forms a cylinder of 14 subunits composed of two heptameric rings stacked back-to-back. Interacts with the co-chaperonin GroES.

The protein localises to the cytoplasm. The enzyme catalyses ATP + H2O + a folded polypeptide = ADP + phosphate + an unfolded polypeptide.. Its function is as follows. Together with its co-chaperonin GroES, plays an essential role in assisting protein folding. The GroEL-GroES system forms a nano-cage that allows encapsulation of the non-native substrate proteins and provides a physical environment optimized to promote and accelerate protein folding. In Sphingopyxis alaskensis (strain DSM 13593 / LMG 18877 / RB2256) (Sphingomonas alaskensis), this protein is Chaperonin GroEL 2.